The sequence spans 147 residues: uncharacterized protein (147 aa).

A run of 4 helical transmembrane segments spans residues 13 to 33, 45 to 65, 80 to 100, and 116 to 136; these read LSLV…IIGL, LFVG…AYFL, YLFT…LILI, and WGFF…IIPY.

The protein resides in the cell membrane. This is an uncharacterized protein from Methanocaldococcus jannaschii (strain ATCC 43067 / DSM 2661 / JAL-1 / JCM 10045 / NBRC 100440) (Methanococcus jannaschii).